The chain runs to 95 residues: Large ribosomal subunit protein bL25 (95 aa).

Belongs to the bacterial ribosomal protein bL25 family. Part of the 50S ribosomal subunit; part of the 5S rRNA/L5/L18/L25 subcomplex. Contacts the 5S rRNA. Binds to the 5S rRNA independently of L5 and L18.

Functionally, this is one of the proteins that binds to the 5S RNA in the ribosome where it forms part of the central protuberance. The protein is Large ribosomal subunit protein bL25 of Haemophilus influenzae (strain ATCC 51907 / DSM 11121 / KW20 / Rd).